The chain runs to 401 residues: MKKLWQNCHIATMQNGQYSYIEDAAIVTEGHLIHWIGKQQQLPTDTYSETVDLNGAWVTPGFIDCHTHSVFGGNRSVEFEKRLQGVSYAEIAASGGGIASTVRATREASEEQLLNSALKRIRCMQQDGVTTIEIKSGYGLNYENERKMLRVIRQIGEKLPMTVKSTCLAAHALPPEYKDQSDAYIEHICTEMLPKLHAEGLVDAVDAFCEHLAFSPAQVERVFKTAQSLGLPVKLHAEQLSSLGGSSLAARYHALSADHLEYMTEDDVKAMAASGTVAVLLPGAFYLLRETQYPPIESLIKHGVRIALSSDLNPGTSPALSLRLMLNMGSTLFRLTPEQALAGVTIHAAQALGLEQTHGSLEQGKVADFVAWDIEHPSEIVYWLGGDLPKRVVQHGQEVIF.

Fe(3+) is bound by residues H66 and H68. Zn(2+)-binding residues include H66 and H68. Residues R75, Y138, and H171 each coordinate 4-imidazolone-5-propanoate. N-formimidoyl-L-glutamate is bound at residue Y138. H236 contacts Fe(3+). H236 is a Zn(2+) binding site. Q239 is a 4-imidazolone-5-propanoate binding site. Residue D311 participates in Fe(3+) binding. Residue D311 coordinates Zn(2+). N-formimidoyl-L-glutamate-binding residues include N313 and G315. A 4-imidazolone-5-propanoate-binding site is contributed by T316.

The protein belongs to the metallo-dependent hydrolases superfamily. HutI family. Requires Zn(2+) as cofactor. The cofactor is Fe(3+).

The protein localises to the cytoplasm. It catalyses the reaction 4-imidazolone-5-propanoate + H2O = N-formimidoyl-L-glutamate. It functions in the pathway amino-acid degradation; L-histidine degradation into L-glutamate; N-formimidoyl-L-glutamate from L-histidine: step 3/3. Its function is as follows. Catalyzes the hydrolytic cleavage of the carbon-nitrogen bond in imidazolone-5-propanoate to yield N-formimidoyl-L-glutamate. It is the third step in the universal histidine degradation pathway. This is Imidazolonepropionase from Acinetobacter baumannii (strain ACICU).